Consider the following 320-residue polypeptide: Cytochrome f (320 aa).

The signal sequence occupies residues 1 to 35; sequence MQMRNTFSWIKEEIIRFIAVSLIIYIITRAPISNA. Residues Tyr-36, Cys-56, Cys-59, and His-60 each contribute to the heme site. The chain crosses the membrane as a helical span at residues 286 to 306; that stretch reads VQGLLLFLASIILAQIFLVLK.

This sequence belongs to the cytochrome f family. As to quaternary structure, the 4 large subunits of the cytochrome b6-f complex are cytochrome b6, subunit IV (17 kDa polypeptide, petD), cytochrome f and the Rieske protein, while the 4 small subunits are PetG, PetL, PetM and PetN. The complex functions as a dimer. Heme is required as a cofactor.

It localises to the plastid. The protein localises to the chloroplast thylakoid membrane. Functionally, component of the cytochrome b6-f complex, which mediates electron transfer between photosystem II (PSII) and photosystem I (PSI), cyclic electron flow around PSI, and state transitions. This chain is Cytochrome f, found in Morus indica (Mulberry).